A 392-amino-acid polypeptide reads, in one-letter code: p21-activated protein kinase-interacting protein 1 (392 aa).

6 WD repeats span residues 33-72 (VADF…MKKK), 73-113 (IEHG…AKKW), 114-155 (ECLK…LVEG), 156-195 (RSAF…LDTA), 196-235 (SISG…CDSL), and 236-275 (VCLC…KMWK). Residues 312–392 (SLPPAAEPSP…RKKKKIKTMQ (81 aa)) form a disordered region. Residue Ser320 is modified to Phosphoserine. Basic and acidic residues predominate over residues 325-345 (EQSKIGKKEPGDTVHKEEKRS). Residues 381-392 (KKRKKKKIKTMQ) show a composition bias toward basic residues.

As to quaternary structure, interacts with PAK1. In terms of tissue distribution, expressed in brain, colon, heart, kidney, liver, lung, muscle, peripheral blood leukocytes, placenta, small intestine, spleen and thymus.

It localises to the nucleus. Its subcellular location is the nucleolus. Its function is as follows. Negatively regulates the PAK1 kinase. PAK1 is a member of the PAK kinase family, which has been shown to play a positive role in the regulation of signaling pathways involving MAPK8 and RELA. PAK1 exists as an inactive homodimer, which is activated by binding of small GTPases such as CDC42 to an N-terminal regulatory domain. PAK1IP1 also binds to the N-terminus of PAK1, and inhibits the specific activation of PAK1 by CDC42. May be involved in ribosomal large subunit assembly. This chain is p21-activated protein kinase-interacting protein 1 (PAK1IP1), found in Homo sapiens (Human).